Consider the following 478-residue polypeptide: Maintenance of telomere capping protein 1 (478 aa).

The segment at 1–153 is disordered; that stretch reads MSENKNSEAE…LHDPIASISN (153 aa). Composition is skewed to basic and acidic residues over residues 77–87 and 95–124; these read TDKKGVEKKAP and AQDEKVEESKENKNSEQDAHGKEKEPQQQE. Acidic residues predominate over residues 125-141; sequence KEEEEEEEEEEEEEEEE. At S273 the chain carries Phosphoserine. 2 stretches are compositionally biased toward basic and acidic residues: residues 321-336 and 421-435; these read QKQQKEADATPDDDRS and SEERNKSYDQKKQKE. Disordered stretches follow at residues 321–341 and 416–448; these read QKQQKEADATPDDDRSSISSN and TGSTASEERNKSYDQKKQKESEDEDEDDEIIDP. A Phosphoserine modification is found at S436. A compositionally biased stretch (acidic residues) spans 436–447; it reads SEDEDEDDEIID.

It belongs to the MTC1 family. Interacts with ribosomes.

Its subcellular location is the cytoplasm. It localises to the cytoplasmic vesicle. The protein localises to the COPI-coated vesicle. Functionally, involved in telomere capping. In Saccharomyces cerevisiae (strain ATCC 204508 / S288c) (Baker's yeast), this protein is Maintenance of telomere capping protein 1 (MTC1).